The primary structure comprises 333 residues: Trans-1,2-dihydrobenzene-1,2-diol dehydrogenase (333 aa).

This sequence belongs to the Gfo/Idh/MocA family. In terms of assembly, homodimer.

The catalysed reaction is (1R,2R)-1,2-dihydrobenzene-1,2-diol + NADP(+) = catechol + NADPH + H(+). It catalyses the reaction D-xylose + NADP(+) = D-xylono-1,5-lactone + NADPH + H(+). This is Trans-1,2-dihydrobenzene-1,2-diol dehydrogenase (Dhdh) from Mus musculus (Mouse).